Reading from the N-terminus, the 1274-residue chain is MSGSCAAPGPGSGSSPAACRFAHYFVLCGIDADSGLEPDELAGENFDQSPLRRTFKSKVLAHYPQNIEWNPFDQDAVNMLCMPKGLSFRTQTDNKDPQFHSFIITREDGSRTYGFVLTFYEEVTSKQICTAMQTLYQMHNAEHYSSVYASSSCSMDSLASSLDEGDTTSLLKLQRYNSYDISRDTLYVSKSICLITPLPFMQACKKFLIQLYKAVTSQQPPPLPLESYIHNILYEVPLPPPGRSLKFYGVYEPVICQRPGPSELPLSDYPLREAFELLGLENLVQVFTCVLLEMQILLYSQDYQRLMTVAEGITTLLFPFQWQHVYVPILPASLLHFLDAPVPYLMGLQSKEGTDRSKLELPQEANLCFVDIDNHFIELPEEFPQFPNKVDFIQELSEVLVQFGIPPEGSLHCSESTSKLKNMVLKDLVNDKKNGNVCTNNISMYELLKGNETIARLQALAKRTGVAVEKMDLSASLGEKDKDLKLHCEEAELRDYQLNVQLREVFANRFTQMFADYEAFVIQTAQDMESWLTNREQMQNFDKASFLSDQPEPYLPFLSRFIETQMFATFIDNKIMSQWEEKDPLLRVFDTRIDKIRLYNVRAPTLRTSIYQKCSTLKEAAQSIEQRLMKMDHTAIHPHLLDMKIGQGKYEQGFFPKLQSDVLATGPTSNNRWVSRSATAQRRKERLRQHSEHVGLDNDLREKYMQEARSLGKNLRQPKLSDLSPAVIAQTNCKFVEGLLKECRMKTKRMLVEKMGHEAVELGHGEANITGLEENTLIASLCDLLERIWSHGLQVKQGKSALWSHLIQFQDREEKQEHLAESPVALGPERRKSDSGVMLPTLRVSLIQDMRHIQNMSEIKTDVGRARAWIRLSLEKKLLSQHLKQLLSNQPLTKKLYKRYAFLRCEEEREQFLYHLLSLNAVDYFCFTSVFTTIMIPYRSVIIPIKKLSNAIITSNPWICVSGELGDTGVMQIPKNLLEMTFECQNLGKLTTVQIGHDNSGLLAKWLVDCVMVRNEITGHTYRFPCGRWLGKGIDDGSLERILIGELMTSASDEDLVKQCRTPPQQKSPTTARRLSITSLTGKNNKPNAGQIQEGIGEAVNNIVKHFHKPEKERGSLTVLLCGENGLVAALEQVFHHGFKSARIFHKNVFIWDFIEKVVAYFETTDQILDNEDDVLIQKSSCKTFCHYVNAINTAPRNIGKDGKFQILVCLGTRDRLLPQWIPLLAECPAITRMYEESALLRDRMTVNSLIRILQTIQDFTIVLEGSLIKGVDV.

Residue serine 2 is modified to N-acetylserine. The 206-residue stretch at 39-244 (DELAGENFDQ…EVPLPPPGRS (206 aa)) folds into the uDENN domain. Residues serine 49 and serine 178 each carry the phosphoserine modification. One can recognise a cDENN domain in the interval 263–399 (ELPLSDYPLR…VDFIQELSEV (137 aa)). In terms of domain architecture, dDENN spans 401–581 (VQFGIPPEGS…DNKIMSQWEE (181 aa)). The 161-residue stretch at 772-932 (LEENTLIASL…DYFCFTSVFT (161 aa)) folds into the RUN 1 domain. Serine 822 is subject to Phosphoserine. A helical membrane pass occupies residues 916 to 936 (LLSLNAVDYFCFTSVFTTIMI). The PLAT domain occupies 936-1044 (IPYRSVIIPI…DDGSLERILI (109 aa)). Threonine 1062 bears the Phosphothreonine mark. Serine 1068, serine 1076, and serine 1079 each carry phosphoserine. In terms of domain architecture, RUN 2 spans 1118–1267 (TVLLCGENGL…QDFTIVLEGS (150 aa)).

The protein belongs to the RAB6IP1 family.

It is found in the membrane. Guanine nucleotide exchange factor (GEF) which may activate RAB39A and/or RAB39B. Promotes the exchange of GDP to GTP, converting inactive GDP-bound Rab proteins into their active GTP-bound form. This Homo sapiens (Human) protein is DENN domain-containing protein 5B (DENND5B).